Reading from the N-terminus, the 493-residue chain is Cobyric acid synthase (493 aa).

Residues 261–455 enclose the GATase cobBQ-type domain; that stretch reads HTRIAVVAYP…LHGLFEDAAV (195 aa). Residue cysteine 342 is the Nucleophile of the active site. The active site involves histidine 447.

The protein belongs to the CobB/CobQ family. CobQ subfamily.

The protein operates within cofactor biosynthesis; adenosylcobalamin biosynthesis. In terms of biological role, catalyzes amidations at positions B, D, E, and G on adenosylcobyrinic A,C-diamide. NH(2) groups are provided by glutamine, and one molecule of ATP is hydrogenolyzed for each amidation. This Acidovorax sp. (strain JS42) protein is Cobyric acid synthase.